We begin with the raw amino-acid sequence, 33 residues long: Brevinin-2PTe (33 aa).

Cys27 and Cys33 form a disulfide bridge.

As to expression, expressed by the skin glands.

It is found in the secreted. In terms of biological role, has antibacterial activity against the Gram-positive bacterium S.aureus ATCC 25923 (MIC=36 uM) and the Gram-negative bacterium E.coli ATCC 25726 (MIC=18 uM). The sequence is that of Brevinin-2PTe from Pulchrana picturata (Malaysian fire frog).